The sequence spans 1194 residues: Immunoglobulin superfamily member 3 (1194 aa).

A signal peptide spans 1–19 (MKCFFPVLSCLAVLGVVSA). Ig-like C2-type domains lie at 20–138 (QRQV…AKMN), 143–262 (PDSL…WYAM), 276–386 (PTDK…KTVT), 401–539 (PIIV…ISIT), 545–661 (FAVT…WTRL), 676–803 (PVTK…EEVS), 813–945 (PDSR…TALT), and 949–1097 (PDAS…YRLT). At 20-1124 (QRQVTVQEGP…LQSIICSNDA (1105 aa)) the chain is on the extracellular side. 2 cysteine pairs are disulfide-bonded: cysteine 42/cysteine 120 and cysteine 167/cysteine 246. Asparagine 43 carries N-linked (GlcNAc...) asparagine glycosylation. The EWI motif signature appears at 250-252 (EWI). Cysteines 302 and 376 form a disulfide. N-linked (GlcNAc...) asparagine glycosylation occurs at asparagine 418. 2 cysteine pairs are disulfide-bonded: cysteine 432–cysteine 511 and cysteine 566–cysteine 645. N-linked (GlcNAc...) asparagine glycosylation is present at asparagine 655. 3 cysteine pairs are disulfide-bonded: cysteine 701/cysteine 782, cysteine 838/cysteine 918, and cysteine 974/cysteine 1080. The N-linked (GlcNAc...) asparagine glycan is linked to asparagine 842. The disordered stretch occupies residues 997-1033 (AGGKRSSPGLEEQEEEREEEEEEDDDDDDDPTERTAL). Residues 1007 to 1027 (EEQEEEREEEEEEDDDDDDDP) are compositionally biased toward acidic residues. N-linked (GlcNAc...) asparagine glycosylation is present at asparagine 1077. The chain crosses the membrane as a helical span at residues 1125-1145 (LFYFVFFYPFPIFGILIITIL). Residues 1146 to 1194 (LVRFKSRNSSKNSDGKNGVPLLWIKEPHLNYSPTCLEPPVLSIHPGAID) lie on the Cytoplasmic side of the membrane.

As to expression, expressed in a wide range of tissues with High expression in Placenta, kidney and lung.

It localises to the membrane. In Homo sapiens (Human), this protein is Immunoglobulin superfamily member 3 (IGSF3).